The sequence spans 213 residues: MNKHNKSADALSLYLVTDSALCADKGLIETVLAAIDGGVTLVQLRDKHASDEALYTTACELKEAIAGRVPLVINDKVQIAHKAKLDGAHIGQGDLSVKQARNILGHDAWLGLSINTLAQLQQTHHHHLDLLDYVGLGPVFATATKQDHAEPIGLEGLSTLSKASVLPTVAIGGINHANARQVYQTGCHGIAVVSAICAADDPKQAAELLIAQR.

4-amino-2-methyl-5-(diphosphooxymethyl)pyrimidine-binding positions include 43–47 (QLRDK) and N74. Mg(2+) is bound by residues D75 and D94. Residue S113 coordinates 4-amino-2-methyl-5-(diphosphooxymethyl)pyrimidine. 2-[(2R,5Z)-2-carboxy-4-methylthiazol-5(2H)-ylidene]ethyl phosphate is bound at residue 142-144 (TAT). A 4-amino-2-methyl-5-(diphosphooxymethyl)pyrimidine-binding site is contributed by K145. Residues G173 and 193–194 (VS) each bind 2-[(2R,5Z)-2-carboxy-4-methylthiazol-5(2H)-ylidene]ethyl phosphate.

This sequence belongs to the thiamine-phosphate synthase family. Mg(2+) serves as cofactor.

The enzyme catalyses 2-[(2R,5Z)-2-carboxy-4-methylthiazol-5(2H)-ylidene]ethyl phosphate + 4-amino-2-methyl-5-(diphosphooxymethyl)pyrimidine + 2 H(+) = thiamine phosphate + CO2 + diphosphate. It carries out the reaction 2-(2-carboxy-4-methylthiazol-5-yl)ethyl phosphate + 4-amino-2-methyl-5-(diphosphooxymethyl)pyrimidine + 2 H(+) = thiamine phosphate + CO2 + diphosphate. The catalysed reaction is 4-methyl-5-(2-phosphooxyethyl)-thiazole + 4-amino-2-methyl-5-(diphosphooxymethyl)pyrimidine + H(+) = thiamine phosphate + diphosphate. The protein operates within cofactor biosynthesis; thiamine diphosphate biosynthesis; thiamine phosphate from 4-amino-2-methyl-5-diphosphomethylpyrimidine and 4-methyl-5-(2-phosphoethyl)-thiazole: step 1/1. Functionally, condenses 4-methyl-5-(beta-hydroxyethyl)thiazole monophosphate (THZ-P) and 2-methyl-4-amino-5-hydroxymethyl pyrimidine pyrophosphate (HMP-PP) to form thiamine monophosphate (TMP). The chain is Thiamine-phosphate synthase from Psychrobacter sp. (strain PRwf-1).